The sequence spans 152 residues: 3-dehydroquinate dehydratase (152 aa).

Tyr-23 acts as the Proton acceptor in catalysis. Substrate contacts are provided by Asn-75, His-81, and Asp-88. His-101 serves as the catalytic Proton donor. Residues 102–103 (IS) and Arg-112 contribute to the substrate site.

This sequence belongs to the type-II 3-dehydroquinase family. In terms of assembly, homododecamer.

It carries out the reaction 3-dehydroquinate = 3-dehydroshikimate + H2O. It functions in the pathway metabolic intermediate biosynthesis; chorismate biosynthesis; chorismate from D-erythrose 4-phosphate and phosphoenolpyruvate: step 3/7. Functionally, catalyzes a trans-dehydration via an enolate intermediate. This is 3-dehydroquinate dehydratase from Alkalilimnicola ehrlichii (strain ATCC BAA-1101 / DSM 17681 / MLHE-1).